The sequence spans 654 residues: GTP-binding protein 1 (654 aa).

Residues 1 to 16 (MASLASSQTEPNTSES) show a composition bias toward polar residues. Residues 1 to 44 (MASLASSQTEPNTSESPVPASMFSPEPDGEDSDCSLDGEPLRNG) form a disordered region. The segment covering 27 to 36 (PDGEDSDCSL) has biased composition (acidic residues). Residues 147–377 (FLEVRVAVVG…FLNLLSPRSS (231 aa)) form the tr-type G domain. The tract at residues 156–163 (GNVDAGKS) is G1. Residue 156–163 (GNVDAGKS) participates in GTP binding. The G2 stretch occupies residues 195–199 (GRTSS). Residues 241 to 244 (DLAG) are G3. Residues 241-245 (DLAGH) and 297-300 (TKID) each bind GTP. The interval 297 to 300 (TKID) is G4. Residues 355–357 (SNV) form a G5 region. Over residues 566 to 585 (TNNLPMNSKPPQQVKMQSTK) the composition is skewed to polar residues. The disordered stretch occupies residues 566–654 (TNNLPMNSKP…GACTASTGGC (89 aa)). The span at 609–620 (AAAIGVTAGAGA) shows a compositional bias: low complexity. The span at 631–642 (GRRRGGQRHKVK) shows a compositional bias: basic residues.

It belongs to the TRAFAC class translation factor GTPase superfamily. Classic translation factor GTPase family. GTPBP1 subfamily.

The protein localises to the cytoplasm. Functionally, promotes degradation of target mRNA species. Plays a role in the regulation of circadian mRNA stability. Binds GTP and has GTPase activity. This Xenopus laevis (African clawed frog) protein is GTP-binding protein 1 (gtpbp1).